We begin with the raw amino-acid sequence, 278 residues long: TATA box-binding protein-associated factor RNA polymerase I subunit D (278 aa).

2 disordered regions span residues 20-71 and 88-116; these read ANRS…SSFE and KKRY…RNPI. A compositionally biased stretch (polar residues) spans 22 to 33; it reads RSDNSSDSSLFK. Position 23 is a phosphoserine (S23). The span at 88–99 shows a compositional bias: basic residues; the sequence is KKRYKKKKKRRY. Phosphoserine occurs at positions 138 and 234.

In terms of assembly, component of the transcription factor SL1/TIF-IB complex, composed of TBP and at least TAF1A, TAF1B, TAF1C and TAF1D. Interacts with UBTF.

It is found in the nucleus. Component of the transcription factor SL1/TIF-IB complex, which is involved in the assembly of the PIC (preinitiation complex) during RNA polymerase I-dependent transcription. The rate of PIC formation probably is primarily dependent on the rate of association of SL1/TIF-IB with the rDNA promoter. SL1/TIF-IB is involved in stabilization of nucleolar transcription factor 1/UBTF on rDNA. Formation of SL1/TIF-IB excludes the association of TBP with TFIID subunits. The polypeptide is TATA box-binding protein-associated factor RNA polymerase I subunit D (TAF1D) (Homo sapiens (Human)).